The chain runs to 497 residues: WASH complex subunit homolog 1 (497 aa).

The segment at E306–D497 is disordered. Pro residues predominate over residues L323–A339. Residues T341–P350 show a composition bias toward low complexity. Residues I351–T372 are compositionally biased toward pro residues. One can recognise a WH2 domain in the interval G390 to I412.

The protein belongs to the WASH1 family. In terms of assembly, component of the WASH core complex. Component of the DHIC (ddl-1-containing hsf-1 inhibitory) complex, which contains at least ddl-1, ddl-2, hsb-1 and hsf-1. Within the complex, interacts with ddl-1. Formation of the DHIC may be dependent upon the Insulin/IGF-1-like signaling (IIS) mediated pathway. In terms of tissue distribution, expressed in several neurons located throughout the body.

Its function is as follows. Acts as a component of the WASH core complex that functions as a nucleation-promoting factor (NPF) at the surface of endosomes, where it recruits and activates the Arp2/3 complex to induce actin polymerization, playing a key role in the fission of tubules that serve as transport intermediates during endosome sorting. Acts as a component of the DHIC (ddl-1-containing hsf-1 inhibitory complex) which modulates lifespan by sequestering the heat shock transcription factor hsf-1 to negatively regulate its binding to DNA and its transcriptional activity. This chain is WASH complex subunit homolog 1, found in Caenorhabditis elegans.